The chain runs to 456 residues: Sensitive to high expression protein 9, mitochondrial (456 aa).

Residues 1–30 (MLRYYGATRNLPLVFSINKLMLRASSFTRP) constitute a mitochondrion transit peptide. At 31–296 (FHYSSYSLQN…WSDKIRRTST (266 aa)) the chain is on the mitochondrial matrix side. Coiled coils occupy residues 71–128 (QHLK…KDEL) and 178–277 (IQKL…YRAI). The helical transmembrane segment at 297 to 317 (WGTFILMGMNIFLFIVLQLLL) threads the bilayer. Over 318-435 (EPWKRKRLVG…KLDAPLVFDT (118 aa)) the chain is Mitochondrial intermembrane. Residues 436 to 456 (LEFYLYSISLVSMTILVSGLI) form a helical membrane-spanning segment.

It belongs to the SHE9 family. As to quaternary structure, homooligomer. Participates in a complex of about 300 kDa.

The protein localises to the mitochondrion inner membrane. Functionally, required for the maintenance of the structure of the mitochondrial inner membrane. Involved in mitochondrial morphology. Causes growth arrest when highly overexpressed. The polypeptide is Sensitive to high expression protein 9, mitochondrial (SHE9) (Saccharomyces cerevisiae (strain ATCC 204508 / S288c) (Baker's yeast)).